Consider the following 236-residue polypeptide: Protein-S-isoprenylcysteine O-methyltransferase (236 aa).

The next 4 membrane-spanning stretches (helical) occupy residues 3-23 (NLHT…LGCV), 24-44 (FGLG…FFAF), 76-96 (AYWL…GKSF), and 108-128 (FLIN…LCLG). S-adenosyl-L-methionine is bound by residues 155–158 (HLLV), Tyr-163, and 168–171 (HPSY). The chain crosses the membrane as a helical span at residues 174-194 (FFIWALGTQMLLGNFVSTLLF). Arg-205 contributes to the substrate binding site. Glu-209 is an S-adenosyl-L-methionine binding site.

It belongs to the class VI-like SAM-binding methyltransferase superfamily. Isoprenylcysteine carboxyl methyltransferase family.

Its subcellular location is the membrane. The enzyme catalyses [protein]-C-terminal S-[(2E,6E)-farnesyl]-L-cysteine + S-adenosyl-L-methionine = [protein]-C-terminal S-[(2E,6E)-farnesyl]-L-cysteine methyl ester + S-adenosyl-L-homocysteine. Its function is as follows. Mediates C-terminal methylation of the isoprenylated C-terminal cysteine in M-factor. The polypeptide is Protein-S-isoprenylcysteine O-methyltransferase (mam4) (Schizosaccharomyces pombe (strain 972 / ATCC 24843) (Fission yeast)).